We begin with the raw amino-acid sequence, 416 residues long: cAMP-dependent protein kinase type II-beta regulatory subunit (416 aa).

The dimerization and phosphorylation stretch occupies residues 2–151 (SIEIPAGLTE…RLQEACKDIL (150 aa)). The tract at residues 53-97 (HEGRTWGDAGAAAGGGTPSKGVNFAEEPMRSDSENGEEEEAAEAG) is disordered. The residue at position 69 (Thr-69) is a Phosphothreonine. Residues Ser-83, Ser-85, and Ser-112 each carry the phosphoserine modification. Residues 152–273 (LFKN…ESLP), Glu-221, Arg-230, 274–416 (FLKS…EPTA), Glu-350, and Arg-359 each bind 3',5'-cyclic AMP.

It belongs to the cAMP-dependent kinase regulatory chain family. In terms of assembly, the inactive form of the enzyme is composed of two regulatory chains and two catalytic chains. Activation by cAMP produces two active catalytic monomers and a regulatory dimer that binds four cAMP molecules. Interacts with PRKACA and PRKACB. Interacts with the phosphorylated form of PJA2. Forms a complex composed of PRKAR2B, GSK3B and GSKIP through GSKIP interaction; facilitates PKA-induced phosphorylation and regulates GSK3B activity. Post-translationally, phosphorylated by the activated catalytic chain. As to expression, four types of regulatory chains are found: I-alpha, I-beta, II-alpha, and II-beta. Their expression varies among tissues and is in some cases constitutive and in others inducible. Brain. Present in a few pyramidal neurons and mostly in mossy fibers. Colocalizes with PJA2 in dentate granule cells and at postsynaptic sites of primary hippocampal neurons.

The protein localises to the cytoplasm. It is found in the cell membrane. Functionally, regulatory subunit of the cAMP-dependent protein kinases involved in cAMP signaling in cells. Type II regulatory chains mediate membrane association by binding to anchoring proteins, including the MAP2 kinase. This is cAMP-dependent protein kinase type II-beta regulatory subunit (Prkar2b) from Rattus norvegicus (Rat).